Here is a 1124-residue protein sequence, read N- to C-terminus: PAN2-PAN3 deadenylation complex catalytic subunit PAN2 (1124 aa).

WD repeat units lie at residues isoleucine 19 to proline 58, proline 118 to phenylalanine 157, asparagine 158 to serine 195, and serine 309 to phenylalanine 348. The linker stretch occupies residues phenylalanine 351 to valine 484. Positions valine 484 to alanine 861 constitute a USP domain. An Exonuclease domain is found at isoleucine 917–tyrosine 1091. Residues aspartate 920, glutamate 922, aspartate 1030, and aspartate 1083 each coordinate a divalent metal cation.

Belongs to the peptidase C19 family. PAN2 subfamily. Forms a heterotrimer with an asymmetric homodimer of the regulatory subunit PAN3 to form the poly(A)-nuclease (PAN) deadenylation complex. A divalent metal cation is required as a cofactor.

The protein localises to the cytoplasm. It catalyses the reaction Exonucleolytic cleavage of poly(A) to 5'-AMP.. Positively regulated by the regulatory subunit PAN3. In terms of biological role, catalytic subunit of the poly(A)-nuclease (PAN) deadenylation complex, one of two cytoplasmic mRNA deadenylases involved in mRNA turnover. PAN specifically shortens poly(A) tails of RNA and the activity is stimulated by poly(A)-binding protein PAB1. PAN deadenylation is followed by rapid degradation of the shortened mRNA tails by the CCR4-NOT complex. Deadenylated mRNAs are then degraded by two alternative mechanisms, namely exosome-mediated 3'-5' exonucleolytic degradation, or deadenylation-dependent mRNA decaping and subsequent 5'-3' exonucleolytic degradation by XRN1. May also be involved in post-transcriptional maturation of mRNA poly(A) tails. The sequence is that of PAN2-PAN3 deadenylation complex catalytic subunit PAN2 from Debaryomyces hansenii (strain ATCC 36239 / CBS 767 / BCRC 21394 / JCM 1990 / NBRC 0083 / IGC 2968) (Yeast).